Reading from the N-terminus, the 89-residue chain is Small ribosomal subunit protein uS15 (89 aa).

The protein belongs to the universal ribosomal protein uS15 family. As to quaternary structure, part of the 30S ribosomal subunit. Forms a bridge to the 50S subunit in the 70S ribosome, contacting the 23S rRNA.

Its function is as follows. One of the primary rRNA binding proteins, it binds directly to 16S rRNA where it helps nucleate assembly of the platform of the 30S subunit by binding and bridging several RNA helices of the 16S rRNA. In terms of biological role, forms an intersubunit bridge (bridge B4) with the 23S rRNA of the 50S subunit in the ribosome. The sequence is that of Small ribosomal subunit protein uS15 from Pseudoalteromonas atlantica (strain T6c / ATCC BAA-1087).